Consider the following 309-residue polypeptide: MRKIIVGSRKSKLALTQTNWFIDQLKALGLPYEFEVKEIVTKGDVILDVTLSKVGGKGLFVKEIEHALLTKEIDMAVHSMKDMPAVLPEGLMIGCTPKRVDPRDAFISKSGASFKELAEGAILGTSSLRRSAQLLAARPDLQVKWIRGNIDTRLRKLKEEDYDAIILATAGLQRMGWDDEVITEHLDETLCVPAVGQGALAIECREDDTDLLQLLAHINDAVTERTVAAERVFLHKLEGGCQVPIAGYATLTENDAIELTALVGSMDGSVLLKETVVGTDPEKVGLEAADRLIKQGAKELILAANKGQQ.

An S-(dipyrrolylmethanemethyl)cysteine modification is found at Cys-241.

The protein belongs to the HMBS family. Monomer. Requires dipyrromethane as cofactor.

It catalyses the reaction 4 porphobilinogen + H2O = hydroxymethylbilane + 4 NH4(+). Its pathway is porphyrin-containing compound metabolism; protoporphyrin-IX biosynthesis; coproporphyrinogen-III from 5-aminolevulinate: step 2/4. Functionally, tetrapolymerization of the monopyrrole PBG into the hydroxymethylbilane pre-uroporphyrinogen in several discrete steps. This Bacillus cereus (strain ZK / E33L) protein is Porphobilinogen deaminase.